Consider the following 99-residue polypeptide: Aspartyl/glutamyl-tRNA(Asn/Gln) amidotransferase subunit C (99 aa).

This sequence belongs to the GatC family. Heterotrimer of A, B and C subunits.

It catalyses the reaction L-glutamyl-tRNA(Gln) + L-glutamine + ATP + H2O = L-glutaminyl-tRNA(Gln) + L-glutamate + ADP + phosphate + H(+). The catalysed reaction is L-aspartyl-tRNA(Asn) + L-glutamine + ATP + H2O = L-asparaginyl-tRNA(Asn) + L-glutamate + ADP + phosphate + 2 H(+). Its function is as follows. Allows the formation of correctly charged Asn-tRNA(Asn) or Gln-tRNA(Gln) through the transamidation of misacylated Asp-tRNA(Asn) or Glu-tRNA(Gln) in organisms which lack either or both of asparaginyl-tRNA or glutaminyl-tRNA synthetases. The reaction takes place in the presence of glutamine and ATP through an activated phospho-Asp-tRNA(Asn) or phospho-Glu-tRNA(Gln). The polypeptide is Aspartyl/glutamyl-tRNA(Asn/Gln) amidotransferase subunit C (Paraburkholderia phymatum (strain DSM 17167 / CIP 108236 / LMG 21445 / STM815) (Burkholderia phymatum)).